Here is a 31-residue protein sequence, read N- to C-terminus: Cytochrome b6-f complex subunit 6 (31 aa).

The chain crosses the membrane as a helical span at residues 3–23 (TLTSYFGFLLVALTITLVLFI).

It belongs to the PetL family. In terms of assembly, the 4 large subunits of the cytochrome b6-f complex are cytochrome b6, subunit IV (17 kDa polypeptide, PetD), cytochrome f and the Rieske protein, while the 4 small subunits are PetG, PetL, PetM and PetN. The complex functions as a dimer.

The protein resides in the plastid. Its subcellular location is the chloroplast thylakoid membrane. Component of the cytochrome b6-f complex, which mediates electron transfer between photosystem II (PSII) and photosystem I (PSI), cyclic electron flow around PSI, and state transitions. PetL is important for photoautotrophic growth as well as for electron transfer efficiency and stability of the cytochrome b6-f complex. The chain is Cytochrome b6-f complex subunit 6 from Populus alba (White poplar).